The chain runs to 183 residues: Adenine phosphoribosyltransferase (183 aa).

It belongs to the purine/pyrimidine phosphoribosyltransferase family. In terms of assembly, homodimer.

The protein localises to the cytoplasm. It catalyses the reaction AMP + diphosphate = 5-phospho-alpha-D-ribose 1-diphosphate + adenine. The protein operates within purine metabolism; AMP biosynthesis via salvage pathway; AMP from adenine: step 1/1. In terms of biological role, catalyzes a salvage reaction resulting in the formation of AMP, that is energically less costly than de novo synthesis. This is Adenine phosphoribosyltransferase from Edwardsiella ictaluri (strain 93-146).